The following is a 134-amino-acid chain: Complexin-1 (134 aa).

The interval 1-112 (MEFVMKQALG…PGCGDAAEEE (112 aa)) is disordered. Positions 15-81 (DMGKMLGGDE…IKKKEEREAE (67 aa)) are enriched in basic and acidic residues. The stretch at 29–69 (DAAKKEEERQEALRQEEEERKAKYAKMEAEREAVRQGIRDK) forms a coiled coil. Residues 48-70 (RKAKYAKMEAEREAVRQGIRDKY) form an interaction with the SNARE complex region.

This sequence belongs to the complexin/synaphin family. As to quaternary structure, binds to the SNARE core complex containing SNAP25, VAMP2 and STX1A.

Its subcellular location is the cytoplasm. The protein localises to the cytosol. It is found in the perikaryon. The protein resides in the presynapse. Positively regulates a late step in synaptic vesicle exocytosis. Organizes the SNAREs into a cross-linked zigzag topology that, when interposed between the vesicle and plasma membranes, is incompatible with fusion, thereby preventing SNAREs from releasing neurotransmitters until an action potential arrives at the synapse. Also involved in glucose-induced secretion of insulin by pancreatic beta-cells. This chain is Complexin-1 (CPLX1), found in Bos taurus (Bovine).